We begin with the raw amino-acid sequence, 965 residues long: Probable ion channel POLLUX (965 aa).

Over residues 1–11 (MAESDGGEASP) the composition is skewed to low complexity. Disordered regions lie at residues 1–76 (MAES…APRG) and 108–158 (GPHA…KSLA). Residues 32–42 (LTKSRTISGSA) show a composition bias toward polar residues. Low complexity-rich tracts occupy residues 52–66 (SNSSSSILVRRSSTA) and 118–149 (RSQQQTPTTTAAAAADSRSPTPAAPPQTASVS). A run of 4 helical transmembrane segments spans residues 187-207 (LSPYLVLMLVVTVISFSLAIW), 251-271 (ADWNLASCSRMLVFAIPVFLV), 317-337 (LALLLATIILIASGGIALYVV), and 369-389 (IVSVSISSGGMLVFATMLGLV). RCK N-terminal domains lie at 410 to 551 (VNHI…ETVV) and 670 to 818 (PEKI…DKSI).

The protein belongs to the castor/pollux (TC 1.A.1.23) family. In terms of tissue distribution, expressed in roots, leaves, stems and panicles.

The protein localises to the nucleus membrane. Its function is as follows. Required for mycorrhizal symbiosis. This Oryza sativa subsp. japonica (Rice) protein is Probable ion channel POLLUX.